The following is a 507-amino-acid chain: Transcription factor SOX-9 (507 aa).

Disordered regions lie at residues 1 to 67 and 160 to 250; these read MNLL…SEED and RLRV…AGKV. The segment covering 30 to 41 has biased composition (low complexity); that stretch reads SAGSPCPSGSGS. Positions 42–52 are enriched in polar residues; it reads DTENTRPQENT. 2 stretches are compositionally biased toward basic and acidic residues: residues 56–67 and 160–174; these read GEPDLKKESEED and RLRV…DYKY. A dimerization (DIM) region spans residues 63–103; the sequence is ESEEDKFPVCIREAVSQVLKGYDWTLVPMPVRVNGSSKNKP. Residues 63–103 form a PQA region; the sequence is ESEEDKFPVCIREAVSQVLKGYDWTLVPMPVRVNGSSKNKP. At Ser-64 the chain carries Phosphoserine; by PKA. Residues 105–173 constitute a DNA-binding region (HMG box); it reads VKRPMNAFMV…QHKKDHPDYK (69 aa). Ser-211 carries the post-translational modification Phosphoserine; by PKA. The tract at residues 224–307 is transactivation domain (TAM); that stretch reads PGEHSGQSQG…LPPNGHPGVP (84 aa). Short sequence motifs (9aaTAD) lie at residues 275 to 284 and 290 to 298; these read IGELSSDVIS and DVNEFDQYL. The disordered stretch occupies residues 335-429; that stretch reads WMSKQQAPPP…PFNLPHYSPS (95 aa). The span at 341–369 shows a compositional bias: pro residues; sequence APPPPPQQPPQAPQAPQAPPQQQAPPQQP. Residues 378–420 are compositionally biased toward polar residues; sequence HTLTTLSSEPGQSQRTHIKTEQLSPSHYSEQQQHSPQQISYSP. A transactivation domain (TAC) region spans residues 392–507; that stretch reads RTHIKTEQLS…QPVYTQLTRP (116 aa). Lys-396 participates in a covalent cross-link: Glycyl lysine isopeptide (Lys-Gly) (interchain with G-Cter in ubiquitin). Residues 458-466 carry the 9aaTAD 3 motif; it reads SGLYSTFTY. The disordered stretch occupies residues 477–507; that stretch reads PIADTSGVPSIPQTHSPQHWEQPVYTQLTRP. The segment covering 483–507 has biased composition (polar residues); it reads GVPSIPQTHSPQHWEQPVYTQLTRP.

In terms of assembly, homodimer; homodimerization is required for activity. Interacts (via C-terminus) with ZNF219; forming a complex that binds to the COL2A1 promoter and activates COL2A1 expression. Interacts with DDRGK1. Interacts with EP300/p300. Interacts with beta-catenin (CTNNB1); inhibiting CTNNB1 activity by competing with the binding sites of TCF/LEF within CTNNB1. Post-translationally, acetylated; acetylation impairs nuclear localization and ability to transactivate expression of target genes. Deacetylated by SIRT1. In terms of processing, phosphorylation at Ser-64 and Ser-211 by PKA increases transcriptional activity and may help delay chondrocyte maturation downstream of PTHLH/PTHrP signaling. Phosphorylation at either Ser-64 or Ser-211 is required for sumoylation, but phosphorylation is not dependent on sumoylation. Phosphorylated on tyrosine residues; tyrosine dephosphorylation by PTPN11/SHP2 blocks SOX9 phosphorylation by PKA and subsequent SUMOylation. Sumoylated; phosphorylation at either Ser-64 or Ser-211 is required for sumoylation. Sumoylation is induced by BMP signaling pathway. Post-translationally, ubiquitinated; ubiquitination leads to proteasomal degradation and is negatively regulated by DDRGK1. Expressed in the intestinal epithelium (at protein level). Expressed in progenitor cells in various organs, including chondroprogenitors, osteoprogenitors and preadipocytes, but is not expressed in most differentiated cell types such as osteoblasts and adipocytes, with the exception of chondrocytes. Highly expressed in developing chondrogenic tissues. Also expressed in some non-chondrogenic tissues such as notochord, otic vesicle and neural tube.

Its subcellular location is the nucleus. Functionally, transcription factor that plays a key role in chondrocytes differentiation and skeletal development. Specifically binds the 5'-ACAAAG-3' DNA motif present in enhancers and super-enhancers and promotes expression of genes important for chondrogenesis, including cartilage matrix protein-coding genes COL2A1, COL4A2, COL9A1, COL11A2 and ACAN, SOX5 and SOX6. Also binds to some promoter regions. Plays a central role in successive steps of chondrocyte differentiation. Absolutely required for precartilaginous condensation, the first step in chondrogenesis during which skeletal progenitors differentiate into prechondrocytes. Together with SOX5 and SOX6, required for overt chondrogenesis when condensed prechondrocytes differentiate into early stage chondrocytes, the second step in chondrogenesis. Later, required to direct hypertrophic maturation and block osteoblast differentiation of growth plate chondrocytes: maintains chondrocyte columnar proliferation, delays prehypertrophy and then prevents osteoblastic differentiation of chondrocytes by lowering beta-catenin (CTNNB1) signaling and RUNX2 expression. Also required for chondrocyte hypertrophy, both indirectly, by keeping the lineage fate of chondrocytes, and directly, by remaining present in upper hypertrophic cells and transactivating COL10A1 along with MEF2C. Low lipid levels are the main nutritional determinant for chondrogenic commitment of skeletal progenitor cells: when lipids levels are low, FOXO (FOXO1 and FOXO3) transcription factors promote expression of SOX9, which induces chondrogenic commitment and suppresses fatty acid oxidation. Mechanistically, helps, but is not required, to remove epigenetic signatures of transcriptional repression and deposit active promoter and enhancer marks at chondrocyte-specific genes. Acts in cooperation with the Hedgehog pathway-dependent GLI (GLI1 and GLI3) transcription factors. In addition to cartilage development, also acts as a regulator of proliferation and differentiation in epithelial stem/progenitor cells: involved in the lung epithelium during branching morphogenesis, by balancing proliferation and differentiation and regulating the extracellular matrix. Controls epithelial branching during kidney development. The polypeptide is Transcription factor SOX-9 (Mus musculus (Mouse)).